The sequence spans 718 residues: ATP-dependent RNA helicase homolog DQX1 (718 aa).

The 169-residue stretch at 54–222 (HLESSPTGVV…WGNSPIVRVP (169 aa)) folds into the Helicase ATP-binding domain. 67–74 (GDPGSGKS) is a binding site for ATP. The DEAQ box motif lies at 167–170 (DEAQ). Positions 245 to 447 (ACQAVLELCQ…ALMRALEDLD (203 aa)) constitute a Helicase C-terminal domain. The interval 690–718 (QLREGTAEPPAAATETSSPQEYGDGCVLQ) is disordered. A compositionally biased stretch (low complexity) spans 696–708 (AEPPAAATETSSP).

Ubiquitous.

Its subcellular location is the nucleus. Its function is as follows. Might be involved in RNA metabolism; it is missing helicase motif III and may not have helicase activity. This Mus musculus (Mouse) protein is ATP-dependent RNA helicase homolog DQX1 (Dqx1).